A 625-amino-acid polypeptide reads, in one-letter code: Dual specificity protein phosphatase 8 (625 aa).

A Rhodanese domain is found at 23–138; it reads GPGGPLVIDS…FSSCFPGLCE (116 aa). Residues 160–302 form the Tyrosine-protein phosphatase domain; that stretch reads GLTRILPHLY…LLEYERSLKL (143 aa). Cys246 (phosphocysteine intermediate) is an active-site residue. Positions 306 to 586 are disordered; the sequence is LQGDPGTPSG…PAPETQFKRR (281 aa). The span at 380-389 shows a compositional bias: basic and acidic residues; the sequence is SSDRLQDTNR. The segment covering 431–448 has biased composition (low complexity); it reads AALGLSSPSPDSPDAAPE. Over residues 555–570 the composition is skewed to basic and acidic residues; that stretch reads DLRRREAARAEPRDAR.

The protein belongs to the protein-tyrosine phosphatase family. Non-receptor class dual specificity subfamily. In terms of assembly, monomer. As to expression, abundant in brain, heart and skeletal muscle.

Its subcellular location is the cytoplasm. The protein localises to the nucleus. The enzyme catalyses O-phospho-L-tyrosyl-[protein] + H2O = L-tyrosyl-[protein] + phosphate. It catalyses the reaction O-phospho-L-seryl-[protein] + H2O = L-seryl-[protein] + phosphate. The catalysed reaction is O-phospho-L-threonyl-[protein] + H2O = L-threonyl-[protein] + phosphate. Has phosphatase activity with synthetic phosphatase substrates and negatively regulates mitogen-activated protein kinase activity, presumably by catalysing their dephosphorylation. Expected to display protein phosphatase activity toward phosphotyrosine, phosphoserine and phosphothreonine residues. This is Dual specificity protein phosphatase 8 (DUSP8) from Homo sapiens (Human).